A 419-amino-acid chain; its full sequence is MRFEEWVKDKHIPFKLNHPDDNYDDFKPLRKIIGDTRVVALGENSHFIKEFFLLRHTLLRFFIEDLGFTTFAFEFGFAEGQIINNWIHGQGTDDEIGRFLKHFYYPEELKTTFLWLREYNKAAKEKITFLGIDIPRNGGSYLPNMEIVHDFFRTADKEALHIIDDAFNIAKKIDYFSTSQAALNLHELTDSEKCRLTSQLARVKVRLEAMAPIHIEKYGIDKYETILHYANGMIYLDYNIQAMSGFISGGGMQGDMGAKDKYMADSVLWHLKNPQSEQKVIVVAHNAHIQKTPILYDGFLSCLPMGQRLKNAIGDDYMSLGITSYSGHTAALYPEVDTKYGFRVDNFQLQEPNEGSVEKAISGCGVTNSFVFFRNIPEDLQSIPNMIRFDSIYMKAELEKAFDGIFQIEKSSVSEVVYE.

Its function is as follows. This enzyme confers resistance to erythromycin through inactivation by hydrolyzing the lactone ring of the antibiotic. The protein is Erythromycin esterase type II (ereB) of Escherichia coli.